The following is a 242-amino-acid chain: Probable transcriptional regulatory protein mhp472 (242 aa).

Belongs to the TACO1 family.

It localises to the cytoplasm. This Mesomycoplasma hyopneumoniae (strain 232) (Mycoplasma hyopneumoniae) protein is Probable transcriptional regulatory protein mhp472.